Consider the following 194-residue polypeptide: Fe/S biogenesis protein NfuA (194 aa).

[4Fe-4S] cluster-binding residues include cysteine 151 and cysteine 154.

The protein belongs to the NfuA family. In terms of assembly, homodimer. The cofactor is [4Fe-4S] cluster.

Its function is as follows. Involved in iron-sulfur cluster biogenesis. Binds a 4Fe-4S cluster, can transfer this cluster to apoproteins, and thereby intervenes in the maturation of Fe/S proteins. Could also act as a scaffold/chaperone for damaged Fe/S proteins. The protein is Fe/S biogenesis protein NfuA of Pasteurella multocida (strain Pm70).